The primary structure comprises 122 residues: Large ribosomal subunit protein uL14 (122 aa).

The protein belongs to the universal ribosomal protein uL14 family. Part of the 50S ribosomal subunit. Forms a cluster with proteins L3 and L19. In the 70S ribosome, L14 and L19 interact and together make contacts with the 16S rRNA in bridges B5 and B8.

Binds to 23S rRNA. Forms part of two intersubunit bridges in the 70S ribosome. The protein is Large ribosomal subunit protein uL14 of Clostridium botulinum (strain 657 / Type Ba4).